A 336-amino-acid polypeptide reads, in one-letter code: UbiA prenyltransferase domain-containing protein 1 (336 aa).

Alanine 2 carries the N-acetylalanine modification. The next 8 membrane-spanning stretches (helical) occupy residues 81-101 (LLLG…LVNT), 132-152 (FGVF…YLSA), 158-178 (LALI…GIGF), 186-206 (LVIL…VQVG), 207-227 (SLAI…EAIL), 243-265 (IVTL…LLFV), 275-295 (THCS…FSLE), and 313-333 (LNLL…AGSL).

It belongs to the UbiA prenyltransferase family. Interacts with HMGCR and SOAT1.

The protein resides in the endoplasmic reticulum membrane. The protein localises to the golgi apparatus membrane. It localises to the mitochondrion membrane. It catalyses the reaction menadiol + (2E,6E,10E)-geranylgeranyl diphosphate = menaquinol-4 + diphosphate. The catalysed reaction is all-trans-decaprenyl diphosphate + 4-hydroxybenzoate = 4-hydroxy-3-(all-trans-decaprenyl)benzoate + diphosphate. Its pathway is quinol/quinone metabolism; menaquinone biosynthesis. It participates in cofactor biosynthesis; ubiquinone biosynthesis. Functionally, prenyltransferase that mediates the formation of menaquinone-4 (MK-4) and coenzyme Q10. MK-4 is a vitamin K2 isoform required for endothelial cell development. Mediates the conversion of phylloquinone (PK) into MK-4, probably by cleaving the side chain of phylloquinone (PK) to release 2-methyl-1,4-naphthoquinone (menadione; K3) and then prenylating it with geranylgeranyl pyrophosphate (GGPP) to form MK-4. Also plays a role in cardiovascular development independently of MK-4 biosynthesis, by acting as a coenzyme Q10 biosynthetic enzyme: coenzyme Q10, also named ubiquinone, plays an important antioxidant role in the cardiovascular system. Mediates biosynthesis of coenzyme Q10 in the Golgi membrane, leading to protect cardiovascular tissues from NOS3/eNOS-dependent oxidative stress. The protein is UbiA prenyltransferase domain-containing protein 1 (Ubiad1) of Mus musculus (Mouse).